Reading from the N-terminus, the 525-residue chain is NADH-quinone oxidoreductase subunit N (525 aa).

14 helical membrane passes run 26-46, 53-73, 90-110, 143-163, 167-187, 202-222, 246-266, 278-298, 314-334, 341-361, 368-388, 411-431, 449-469, and 487-507; these read LSPM…DAFA, VLQP…VVLL, PTLF…LLVA, VQTE…LFVA, LLVM…LCGL, YFLL…FAYG, LYLS…AAPF, PTPI…GALL, PVIW…ALTQ, LAYS…GSNI, MFYL…VSLV, LAGT…TSGF, LVVV…RVIV, and PTLT…LGVA.

It belongs to the complex I subunit 2 family. NDH-1 is composed of 14 different subunits. Subunits NuoA, H, J, K, L, M, N constitute the membrane sector of the complex.

Its subcellular location is the cell membrane. It catalyses the reaction a quinone + NADH + 5 H(+)(in) = a quinol + NAD(+) + 4 H(+)(out). Its function is as follows. NDH-1 shuttles electrons from NADH, via FMN and iron-sulfur (Fe-S) centers, to quinones in the respiratory chain. The immediate electron acceptor for the enzyme in this species is believed to be a menaquinone. Couples the redox reaction to proton translocation (for every two electrons transferred, four hydrogen ions are translocated across the cytoplasmic membrane), and thus conserves the redox energy in a proton gradient. The chain is NADH-quinone oxidoreductase subunit N from Parafrankia sp. (strain EAN1pec).